A 638-amino-acid polypeptide reads, in one-letter code: 1-deoxy-D-xylulose-5-phosphate synthase (638 aa).

Thiamine diphosphate-binding positions include His-72 and Gly-113 to Ala-115. Asp-144 provides a ligand contact to Mg(2+). Thiamine diphosphate-binding positions include Gly-145 to Ala-146, Asn-174, Tyr-289, and Glu-372. Residue Asn-174 coordinates Mg(2+).

It belongs to the transketolase family. DXPS subfamily. In terms of assembly, homodimer. The cofactor is Mg(2+). Requires thiamine diphosphate as cofactor.

It catalyses the reaction D-glyceraldehyde 3-phosphate + pyruvate + H(+) = 1-deoxy-D-xylulose 5-phosphate + CO2. The protein operates within metabolic intermediate biosynthesis; 1-deoxy-D-xylulose 5-phosphate biosynthesis; 1-deoxy-D-xylulose 5-phosphate from D-glyceraldehyde 3-phosphate and pyruvate: step 1/1. Its function is as follows. Catalyzes the acyloin condensation reaction between C atoms 2 and 3 of pyruvate and glyceraldehyde 3-phosphate to yield 1-deoxy-D-xylulose-5-phosphate (DXP). This is 1-deoxy-D-xylulose-5-phosphate synthase from Gloeobacter violaceus (strain ATCC 29082 / PCC 7421).